The chain runs to 158 residues: NAD(P)H-quinone oxidoreductase subunit O, chloroplastic (158 aa).

The N-terminal 38 residues, 1–38, are a transit peptide targeting the chloroplast; it reads MAFSATVSQLSSLSTISSSLPISSRRLPHRSLPQFTVK. The segment at 33–70 is disordered; the sequence is PQFTVKAEAEKEKQSTQGKSDGEASPAATKTPKTLPKK. Over residues 56 to 70 the composition is skewed to low complexity; that stretch reads ASPAATKTPKTLPKK.

The protein belongs to the NDH complex subunit O family. In terms of assembly, part of the chloroplast NDH complex, composed of a mixture of chloroplast and nucleus encoded subunits. Component of the NDH subcomplex A, at least composed of ndhH, ndhI, ndhJ, ndhK, ndhL, ndhM, ndhN and ndhO.

It localises to the plastid. The protein localises to the chloroplast thylakoid membrane. The catalysed reaction is a plastoquinone + NADH + (n+1) H(+)(in) = a plastoquinol + NAD(+) + n H(+)(out). The enzyme catalyses a plastoquinone + NADPH + (n+1) H(+)(in) = a plastoquinol + NADP(+) + n H(+)(out). NDH shuttles electrons from NAD(P)H:plastoquinone, via FMN and iron-sulfur (Fe-S) centers, to quinones in the photosynthetic chain and possibly in a chloroplast respiratory chain. The immediate electron acceptor for the enzyme in this species is believed to be plastoquinone. Couples the redox reaction to proton translocation, and thus conserves the redox energy in a proton gradient. The chain is NAD(P)H-quinone oxidoreductase subunit O, chloroplastic from Arabidopsis thaliana (Mouse-ear cress).